Reading from the N-terminus, the 957-residue chain is Translation initiation factor IF-2 (957 aa).

Disordered stretches follow at residues Lys34–Lys282 and Ser311–Gly367. Over residues Pro107–Arg161 the composition is skewed to pro residues. Residues Thr163–Gly188 are compositionally biased toward basic and acidic residues. Residues Pro209 to Pro242 are compositionally biased toward pro residues. Basic and acidic residues-rich tracts occupy residues Leu250–Ile259 and Lys266–Arg275. Positions Arg444–Tyr617 constitute a tr-type G domain. Positions Gly453–Thr460 are G1. Position 453 to 460 (Gly453 to Thr460) interacts with GTP. Residues Gly478–His482 are G2. The G3 stretch occupies residues Asp503–Gly506. GTP-binding positions include Asp503–His507 and Asn557–Asp560. The G4 stretch occupies residues Asn557–Asp560. The G5 stretch occupies residues Ser593–Leu595.

Belongs to the TRAFAC class translation factor GTPase superfamily. Classic translation factor GTPase family. IF-2 subfamily.

Its subcellular location is the cytoplasm. In terms of biological role, one of the essential components for the initiation of protein synthesis. Protects formylmethionyl-tRNA from spontaneous hydrolysis and promotes its binding to the 30S ribosomal subunits. Also involved in the hydrolysis of GTP during the formation of the 70S ribosomal complex. The polypeptide is Translation initiation factor IF-2 (Thermosynechococcus vestitus (strain NIES-2133 / IAM M-273 / BP-1)).